A 462-amino-acid polypeptide reads, in one-letter code: tRNA modification GTPase MnmE (462 aa).

(6S)-5-formyl-5,6,7,8-tetrahydrofolate is bound by residues arginine 27, glutamate 89, and arginine 128. Residues glycine 224 to phenylalanine 383 enclose the TrmE-type G domain. Asparagine 234 is a K(+) binding site. Residues asparagine 234 to serine 239, threonine 253 to threonine 259, and aspartate 278 to glycine 281 contribute to the GTP site. Mg(2+) is bound at residue serine 238. Positions 253, 255, and 258 each coordinate K(+). Mg(2+) is bound at residue threonine 259. Lysine 462 is a binding site for (6S)-5-formyl-5,6,7,8-tetrahydrofolate.

It belongs to the TRAFAC class TrmE-Era-EngA-EngB-Septin-like GTPase superfamily. TrmE GTPase family. In terms of assembly, homodimer. Heterotetramer of two MnmE and two MnmG subunits. The cofactor is K(+).

The protein localises to the cytoplasm. In terms of biological role, exhibits a very high intrinsic GTPase hydrolysis rate. Involved in the addition of a carboxymethylaminomethyl (cmnm) group at the wobble position (U34) of certain tRNAs, forming tRNA-cmnm(5)s(2)U34. In Latilactobacillus sakei subsp. sakei (strain 23K) (Lactobacillus sakei subsp. sakei), this protein is tRNA modification GTPase MnmE.